A 469-amino-acid chain; its full sequence is Protein translocase subunit SecY (469 aa).

Residues 1-20 (MSFIDSLATLGQYLPAVTKP) lie on the Cytoplasmic side of the membrane. The chain crosses the membrane as a helical span at residues 21 to 47 (KEKPSLGQKLVWSLVAVIIYLIMASTP). Residues 48–59 (LYGITSASFFKN) lie on the Extracellular side of the membrane. The helical intramembrane region spans 60-67 (LILEQIIF). Residues 60 to 88 (LILEQIIFASTTGTLAQLGIGPIITAGLI) traverse the membrane as a discontinuously helical segment. An intramembrane segment occupies 68–79 (ASTTGTLAQLGI). The segment at residues 80–88 (GPIITAGLI) is an intramembrane region (helical). Over 89–109 (MQILAGSKLISIDLNDPDDRV) the chain is Cytoplasmic. Residues 110 to 131 (KFTEAQKGLAFIFILVESALFG) traverse the membrane as a helical segment. The Extracellular portion of the chain corresponds to 132 to 146 (YVLARTSTTINASIL). A helical membrane pass occupies residues 147–171 (FIAGIVIAQLIVATYLILLLDELIQ). Topologically, residues 172 to 178 (KGWGLGS) are cytoplasmic. Residues 179–197 (GVSLFILAGVMKIMFWDMF) form a helical membrane-spanning segment. Over 198–240 (GIASVSSQNLPIGFFPALFTALASHSDVLNLIVNTSTKNLFQP) the chain is Extracellular. A helical transmembrane segment spans residues 241-262 (DLVGLVTTIALIIITIYLTTMT). Over 263 to 287 (IEIPVTSQKLRGIRRTIPLNFLYVS) the chain is Cytoplasmic. A helical membrane pass occupies residues 288–309 (SIPVIFVAVLGSDIQLFASLAS). At 310 to 347 (YVSPSASNILNTVSGVFFFPPPNSAIPHSIYAVVLDPL) the chain is on the extracellular side. Residues 348 to 367 (GALEYAVVFIVLSILFGILW) form a helical membrane-spanning segment. The Cytoplasmic segment spans residues 368-410 (VDVAGLDPATQAQQLVEAGIEIPGVRNNPKIIEGILARYIYPL). A helical transmembrane segment spans residues 411–429 (AFFSSIIVGLIAVFATLLG). Over 430–432 (AYG) the chain is Extracellular. The helical transmembrane segment at 433–447 (TGIGILLAVTIAIQY) threads the bilayer. Residues 448–469 (YSLLAYERSLEMYPLLKRLIGE) are Cytoplasmic-facing.

This sequence belongs to the SecY/SEC61-alpha family. As to quaternary structure, component of the Sec protein translocase complex. Heterotrimer consisting of alpha (SecY), beta (SecG) and gamma (SecE) subunits. The heterotrimers can form oligomers, although 1 heterotrimer is thought to be able to translocate proteins. Interacts with the ribosome. May interact with SecDF, and other proteins may be involved.

It is found in the cell membrane. The central subunit of the protein translocation channel SecYEG. Consists of two halves formed by TMs 1-5 and 6-10. These two domains form a lateral gate at the front which open onto the bilayer between TMs 2 and 7, and are clamped together by SecE at the back. The channel is closed by both a pore ring composed of hydrophobic SecY resides and a short helix (helix 2A) on the extracellular side of the membrane which forms a plug. The plug probably moves laterally to allow the channel to open. The ring and the pore may move independently. This Saccharolobus solfataricus (strain ATCC 35092 / DSM 1617 / JCM 11322 / P2) (Sulfolobus solfataricus) protein is Protein translocase subunit SecY.